Consider the following 328-residue polypeptide: MQYKNLGKSGLKVSTLSFGAWVTFGNQLDVKEAKSILQCCRDHGVNFFDNAEVYANGRAEEIMGQAIRELGWRRSDIVISTKIFWGGPGPNDKGLSRKHIVEGTKASLKRLDMDYVDVLYCHRPDASTPIEETVRAMNYVIDKGWAFYWGTSEWSAQQITEAWGAADRLDLVGPIVEQPEYNMFARHKVETEFLPLYTNHGIGLTTWSPLASGVLTGKYNKGAIPSDSRFALENYKNLANRSLVDDVLRKVSGLKPIADELGVTLAQLAIAWCASNPNVSSVITGATRESQIQENMKAVDVIPLLTPIVLDKIEQVIQSKPKRPESYR.

Residues tryptophan 21, glutamine 27, and aspartate 49 each contribute to the NADP(+) site. Tyrosine 54 acts as the Proton donor/acceptor in catalysis. Positions 152, 178, 207, 208, 209, 210, 211, 218, 229, 285, 287, 291, 294, and 295 each coordinate NADP(+).

This sequence belongs to the shaker potassium channel beta subunit family. As to quaternary structure, forms heteromultimeric complexes with potassium channel alpha subunits. As to expression, expressed in roots, leaves and flowers (at protein level).

In terms of biological role, probable accessory potassium channel protein which modulates the activity of the pore-forming alpha subunit. This chain is Probable voltage-gated potassium channel subunit beta (KAB1), found in Arabidopsis thaliana (Mouse-ear cress).